The primary structure comprises 431 residues: Trigger factor (431 aa).

Residues 164–249 enclose the PPIase FKBP-type domain; sequence GNIAVIDFKG…IKEIKVKELP (86 aa).

Belongs to the FKBP-type PPIase family. Tig subfamily.

The protein localises to the cytoplasm. The enzyme catalyses [protein]-peptidylproline (omega=180) = [protein]-peptidylproline (omega=0). In terms of biological role, involved in protein export. Acts as a chaperone by maintaining the newly synthesized protein in an open conformation. Functions as a peptidyl-prolyl cis-trans isomerase. The protein is Trigger factor of Clostridium tetani (strain Massachusetts / E88).